We begin with the raw amino-acid sequence, 62 residues long: MVRVNRENRSTFLRVKCPDCENEQVVFERASTVVECTVCGRILAEPHGGKADIKAEIMAVLE.

Zn(2+) is bound by residues C17, C20, C36, and C39. The C4-type zinc finger occupies 17–39; that stretch reads CPDCENEQVVFERASTVVECTVC.

Belongs to the eukaryotic ribosomal protein eS27 family. In terms of assembly, part of the 30S ribosomal subunit. It depends on Zn(2+) as a cofactor.

This is Small ribosomal subunit protein eS27 from Methanoculleus marisnigri (strain ATCC 35101 / DSM 1498 / JR1).